The sequence spans 435 residues: MNQQTVNVIGAGLAGSEAAWQLAKRGIQVKLYEMRPVKQTPAHHTDKFAELVCSNSLRSNTLANAVGVLKEEMRALDSAIIAAADECSVPAGGALAVDRHEFAASVTNRVKNHPNVTVINEEVTEIPEGPTIIATGPLTSESLSAQLKELTGEDYLYFYDAAAPIVEKDSLDMDKVYLKSRYDKGEAAYLNCPMTEEEFDRFHEALTSAETVPLKEFEKEIFFEGCMPIEVMAKRGKKTMLFGPMKPVGLEHPVTGKRPYAVVQLRQDDAAGTLYNIVGFQTHLKWGDQKEVLKLIPGLENVEIVRYGVMHRNTFINSPSLLKPTYQFKNRSDLFFAGQMTGVEGYVESAASGLVAGINAAKLVLGEELVIFPQETAIGSMAHYITTTNQKNFQPMNANFGLLKELPVKIKNKKERNEQYANRAIETIQTISKTI.

An FAD-binding site is contributed by Gly-10–Gly-15.

The protein belongs to the MnmG family. TrmFO subfamily. As to quaternary structure, homodimer. It depends on FAD as a cofactor.

The protein resides in the cytoplasm. It carries out the reaction uridine(54) in tRNA + (6R)-5,10-methylene-5,6,7,8-tetrahydrofolate + NADH + H(+) = 5-methyluridine(54) in tRNA + (6S)-5,6,7,8-tetrahydrofolate + NAD(+). The catalysed reaction is uridine(54) in tRNA + (6R)-5,10-methylene-5,6,7,8-tetrahydrofolate + NADPH + H(+) = 5-methyluridine(54) in tRNA + (6S)-5,6,7,8-tetrahydrofolate + NADP(+). In terms of biological role, catalyzes the folate-dependent formation of 5-methyl-uridine at position 54 (M-5-U54) in all tRNAs. The chain is Methylenetetrahydrofolate--tRNA-(uracil-5-)-methyltransferase TrmFO from Bacillus subtilis (strain 168).